Reading from the N-terminus, the 341-residue chain is HTH-type transcriptional repressor CytR (341 aa).

Positions 10 to 64 constitute an HTH lacI-type domain; the sequence is ATMKDVALKAKVSTATVSRALMNPDKVSQATRNRVEKAAREVGYLPQPMGRNVKR. A DNA-binding region (H-T-H motif) is located at residues 12-31; that stretch reads MKDVALKAKVSTATVSRALM.

In terms of biological role, this protein negatively controls the transcription initiation of genes such as deoCABD, udp, and cdd encoding catabolizing enzymes and nupC, nupG, and tsx encoding transporting and pore-forming proteins. Binds cytidine and adenosine as effectors. The protein is HTH-type transcriptional repressor CytR (cytR) of Escherichia coli (strain K12).